Reading from the N-terminus, the 113-residue chain is Large ribosomal subunit protein bL19 (113 aa).

It belongs to the bacterial ribosomal protein bL19 family.

This protein is located at the 30S-50S ribosomal subunit interface and may play a role in the structure and function of the aminoacyl-tRNA binding site. The sequence is that of Large ribosomal subunit protein bL19 from Mycobacterium avium (strain 104).